Here is a 279-residue protein sequence, read N- to C-terminus: Dermonecrotic toxin LspiSicTox-betaIE3ii (279 aa).

Histidine 5 is a catalytic residue. 2 residues coordinate Mg(2+): glutamate 25 and aspartate 27. Histidine 41 serves as the catalytic Nucleophile. Disulfide bonds link cysteine 45/cysteine 51 and cysteine 47/cysteine 190. Aspartate 85 is a binding site for Mg(2+).

It belongs to the arthropod phospholipase D family. Class II subfamily. Mg(2+) serves as cofactor. Expressed by the venom gland.

The protein resides in the secreted. It catalyses the reaction an N-(acyl)-sphingosylphosphocholine = an N-(acyl)-sphingosyl-1,3-cyclic phosphate + choline. The catalysed reaction is an N-(acyl)-sphingosylphosphoethanolamine = an N-(acyl)-sphingosyl-1,3-cyclic phosphate + ethanolamine. It carries out the reaction a 1-acyl-sn-glycero-3-phosphocholine = a 1-acyl-sn-glycero-2,3-cyclic phosphate + choline. The enzyme catalyses a 1-acyl-sn-glycero-3-phosphoethanolamine = a 1-acyl-sn-glycero-2,3-cyclic phosphate + ethanolamine. Its function is as follows. Dermonecrotic toxins cleave the phosphodiester linkage between the phosphate and headgroup of certain phospholipids (sphingolipid and lysolipid substrates), forming an alcohol (often choline) and a cyclic phosphate. This toxin acts on sphingomyelin (SM). It may also act on ceramide phosphoethanolamine (CPE), lysophosphatidylcholine (LPC) and lysophosphatidylethanolamine (LPE), but not on lysophosphatidylserine (LPS), and lysophosphatidylglycerol (LPG). It acts by transphosphatidylation, releasing exclusively cyclic phosphate products as second products. Induces dermonecrosis, hemolysis, increased vascular permeability, edema, inflammatory response, and platelet aggregation. This is Dermonecrotic toxin LspiSicTox-betaIE3ii from Loxosceles spinulosa (Recluse spider).